Reading from the N-terminus, the 201-residue chain is Peroxiredoxin-2F, mitochondrial (201 aa).

The transit peptide at 1–30 directs the protein to the mitochondrion; that stretch reads MAMSILKLRNLSALRSAANSARIGVSSRGF. Threonine 37 carries the phosphothreonine modification. A Thioredoxin domain is found at 37–201; the sequence is TDITSAAPGV…TGAEVILGQI (165 aa). The Cysteine sulfenic acid (-SOH) intermediate role is filled by cysteine 89. Phosphoserine is present on serine 149.

It belongs to the peroxiredoxin family. Prx5 subfamily. Monomer. As to expression, expressed in the whole plant.

It is found in the mitochondrion matrix. It carries out the reaction [glutaredoxin]-dithiol + a hydroperoxide = [glutaredoxin]-disulfide + an alcohol + H2O. In terms of biological role, thiol-specific peroxidase that catalyzes the reduction of hydrogen peroxide and organic hydroperoxides to water and alcohols, respectively. Plays a role in cell protection against oxidative stress by detoxifying peroxides. Reduces preferentially hydrogen peroxide rather than alkyl peroxides. May be involved in mitochondrial redox homeostasis. The protein is Peroxiredoxin-2F, mitochondrial (PRXIIF) of Arabidopsis thaliana (Mouse-ear cress).